Consider the following 163-residue polypeptide: Single-stranded DNA-binding protein 2 (163 aa).

In terms of domain architecture, SSB spans 1 to 104 (MINNVVLVGR…VVADNFQMLE (104 aa)). The segment at 109 to 163 (REGGSTGSFNGGFNNNTSSSNSYSAPAQQTPNFGRDDSPFGNSNPMDISDDDLPF) is disordered. Over residues 119–130 (GGFNNNTSSSNS) the composition is skewed to low complexity. Over residues 131–140 (YSAPAQQTPN) the composition is skewed to polar residues. Residues 158 to 163 (DDDLPF) carry the Important for interaction with partner proteins motif.

Homotetramer.

Its function is as follows. Plays an important role in DNA replication, recombination and repair. Binds to ssDNA and to an array of partner proteins to recruit them to their sites of action during DNA metabolism. This chain is Single-stranded DNA-binding protein 2 (ssb2), found in Streptococcus pyogenes serotype M6 (strain ATCC BAA-946 / MGAS10394).